Reading from the N-terminus, the 121-residue chain is Prefoldin subunit beta (121 aa).

The protein belongs to the prefoldin subunit beta family. As to quaternary structure, heterohexamer of two alpha and four beta subunits.

It is found in the cytoplasm. Molecular chaperone capable of stabilizing a range of proteins. Seems to fulfill an ATP-independent, HSP70-like function in archaeal de novo protein folding. The sequence is that of Prefoldin subunit beta from Caldivirga maquilingensis (strain ATCC 700844 / DSM 13496 / JCM 10307 / IC-167).